Reading from the N-terminus, the 270-residue chain is F-actin-capping protein subunit beta (270 aa).

Polar residues predominate over residues 245-258; that stretch reads QTRSQKSTTDSQEQ. The interval 245-270 is disordered; the sequence is QTRSQKSTTDSQEQQQKEVIKGLQNL.

This sequence belongs to the F-actin-capping protein beta subunit family. As to quaternary structure, component of the F-actin capping complex, composed of a heterodimer of an alpha and a beta subunit.

Its subcellular location is the cytoplasm. It localises to the cytoskeleton. The protein resides in the actin patch. Its function is as follows. F-actin-capping proteins bind in a Ca(2+)-independent manner to the fast growing ends of actin filaments (barbed end) thereby blocking the exchange of subunits at these ends. Unlike other capping proteins (such as gelsolin and severin), these proteins do not sever actin filaments. In Candida glabrata (strain ATCC 2001 / BCRC 20586 / JCM 3761 / NBRC 0622 / NRRL Y-65 / CBS 138) (Yeast), this protein is F-actin-capping protein subunit beta (CAP2).